A 182-amino-acid polypeptide reads, in one-letter code: UPF0398 protein lwe1908 (182 aa).

It belongs to the UPF0398 family.

This chain is UPF0398 protein lwe1908, found in Listeria welshimeri serovar 6b (strain ATCC 35897 / DSM 20650 / CCUG 15529 / CIP 8149 / NCTC 11857 / SLCC 5334 / V8).